The primary structure comprises 301 residues: Movement protein (301 aa).

Disordered regions lie at residues 1 to 22 (MLTLFGNKRPSKSAGKDEGPLV) and 282 to 301 (VEEEEEGISDSVAQLSFDEI). Essential for tubule formation and cell-to-cell movement stretches follow at residues 19-159 (GPLV…NMPS) and 209-283 (GVSF…RSVE). The tract at residues 284–288 (EEEEG) is essential for long-distance movement.

This sequence belongs to the tospovirus movement protein family. Oligomerizes to form tubule structures through host plasmodesma. Interacts with host A.thaliana At4g26020 protein, which is involved in intra- and inter-cellular trafficking.

Its subcellular location is the host cell junction. It is found in the host plasmodesma. Viral movemement protein which is responsible for cell-to cell spread of viral genome. Increases the size exclusion limit (SEL) of plasmodesmata by forming tubules structures, thereby allowing viral ribonucleocapsids to spread directly to neighboring cells. In Tomato spotted wilt virus (strain Brazilian Br-01) (TSWV), this protein is Movement protein (NSM).